The chain runs to 420 residues: Methyltransferase/ribosomally synthesized cyclic peptide gymnopeptides precursor gymMA1 (420 aa).

The interval 1–251 is methyltransferase domain; the sequence is MQSSTQKQAG…GISTFYIPPK (251 aa). Active-site residues include Arg72, Tyr76, and Tyr98. The S-adenosyl-L-methionine site is built by Tyr98, His100, Val103, Ala130, Gln172, Ala213, Ser244, and Thr245. The clasp domain stretch occupies residues 252-378; it reads ELKDPSMDIM…WALRCAMKKM (127 aa). The precursor leader stretch occupies residues 379 to 392; sequence PSSFMDEVDANNLP. An N-methylvaline mark is found at Val394 and Val396. Gly398 carries the post-translational modification N-methylglycine. Val399 is modified (N-methylvaline). An N-methylalanine modification is found at Ala400. Gly402 carries the post-translational modification N-methylglycine. Residues Val404, Val406, Val408, and Val410 each carry the N-methylvaline modification.

In the N-terminal section; belongs to the precorrin methyltransferase family. As to quaternary structure, homodimer. Post-translationally, gymMA1 automethylates at Val-394, Val-396, Gly-398, Val-399, Ala-400, Gly-402, Val-404, Val-406, Val-408 and Val-410 before being processed by a prolyloligopeptidase which likely forms a peptidyl ester upon removal of the follower propeptide, which then undergoes macrocyclization with the N-terminus of the modified core peptide. Peptide backbone alpha-N-methylations change the physicochemical properties of amide bonds to provide structural constraints and other favorable characteristics including biological membrane permeability to peptides.

The protein operates within mycotoxin biosynthesis. Functionally, fusion protein of the methyltransferase gymM1 and the gymnopeptides precursor; part of the gene cluster that mediates the biosynthesis of gymnopeptides, highly methylated cyclic octadecapeptides with striking antiproliferative activity on several human cancer cell lines. Gymnopeptides derive from the C-terminus of the gymMA1 protein, and it is the gymMA1 protein that methylates its own C-terminus using S-adenosyl methionine (SAM). The C-terminus is subsequently cleaved off and macrocyclized by a prolyloligopeptidase to give the final product. The chain is Methyltransferase/ribosomally synthesized cyclic peptide gymnopeptides precursor gymMA1 from Gymnopus fusipes (Spindle toughshank).